Reading from the N-terminus, the 364-residue chain is Zinc finger protein 474 (364 aa).

Residues 1–10 are compositionally biased toward basic residues; the sequence is MERGKKKRIS. Disordered regions lie at residues 1–21 and 37–60; these read MERG…HHSK and SYSS…DTQK. The segment at 93–122 adopts a C2HC/C3H-type 1 zinc-finger fold; it reads GFRVCYICGREFGSQSIAIHEPQCLQKWHI. Zn(2+) is bound by residues C97, C100, H112, and C116. Residues 127–147 are disordered; sequence LPKHLRRPEPSKPQSLSSSGS. Positions 138–147 are enriched in low complexity; it reads KPQSLSSSGS. C2HC/C3H-type zinc fingers lie at residues 164–193, 220–249, and 283–312; these read QLLP…KGEG, RTVI…KWKM, and QLVF…HPYG. Zn(2+) contacts are provided by C168, C171, H183, C187, C224, C227, H239, C243, C287, C290, H302, and C306. The disordered stretch occupies residues 187–214; the sequence is CKPKGEGPRAPHSNSSDHLTGLKKACSG.

Requires Zn(2+) as cofactor.

The sequence is that of Zinc finger protein 474 (ZNF474) from Homo sapiens (Human).